The sequence spans 528 residues: Probable protein phosphatase 2C 51 (528 aa).

A helical transmembrane segment spans residues Ser8–Cys28. Positions Arg71–Leu445 constitute a PPM-type phosphatase domain. Positions 117, 118, 385, and 436 each coordinate Mn(2+).

This sequence belongs to the PP2C family. Requires Mg(2+) as cofactor. It depends on Mn(2+) as a cofactor.

It is found in the membrane. The enzyme catalyses O-phospho-L-seryl-[protein] + H2O = L-seryl-[protein] + phosphate. The catalysed reaction is O-phospho-L-threonyl-[protein] + H2O = L-threonyl-[protein] + phosphate. The sequence is that of Probable protein phosphatase 2C 51 from Arabidopsis thaliana (Mouse-ear cress).